We begin with the raw amino-acid sequence, 252 residues long: Probable transcriptional regulatory protein CE1776 (252 aa).

The disordered stretch occupies residues 1-22; the sequence is MAGHSKWATTKHKKAANDAKRG.

The protein belongs to the TACO1 family.

The protein resides in the cytoplasm. This is Probable transcriptional regulatory protein CE1776 from Corynebacterium efficiens (strain DSM 44549 / YS-314 / AJ 12310 / JCM 11189 / NBRC 100395).